Reading from the N-terminus, the 397-residue chain is Enoyl-[acyl-carrier-protein] reductase [NADH] (397 aa).

NAD(+)-binding positions include 48 to 53 (GASTGY), 74 to 75 (FE), 111 to 112 (DA), and 139 to 140 (LA). Tyrosine 224 serves as a coordination point for substrate. Tyrosine 234 acts as the Proton donor in catalysis. NAD(+) is bound by residues lysine 243 and 272 to 274 (VVT).

Belongs to the TER reductase family. As to quaternary structure, monomer.

The enzyme catalyses a 2,3-saturated acyl-[ACP] + NAD(+) = a (2E)-enoyl-[ACP] + NADH + H(+). Its pathway is lipid metabolism; fatty acid biosynthesis. Functionally, involved in the final reduction of the elongation cycle of fatty acid synthesis (FAS II). Catalyzes the reduction of a carbon-carbon double bond in an enoyl moiety that is covalently linked to an acyl carrier protein (ACP). This chain is Enoyl-[acyl-carrier-protein] reductase [NADH], found in Pseudomonas fluorescens (strain SBW25).